The sequence spans 469 residues: MTVADIWIIMPLAILAGASLLILLLGAVVPGRYGTAVGVAACVGAALWALQLQPAALSQTLGVAFTPFARFFTVLFSLTAAATLLLSHDHNVRRDISGEEYPATVIFAAFGMAVVSASANLLILFLGLEALTFAFYILVAIDLNRAESAEAGLKYLLLGAISAACIAFGIALLYAAAGTLAIPEVVRLTLSAGAQDPIALAGWGLLLIGIAFKISLVPAHHWTPDVYQGAPTPVVAFLSTASKGAAIAFLLLLLPSGSGFKTLHTPLWWLSLLSMLVGNLAALLQTNLKRMLAYSSIAQMGYLVLALLTGSSEGFAAVILYVVVYTAMNLAAFGAVASLTESVGMENVEDYRGVGYSRPFQAGILALALFALAGIPPTAGFIGKFFIFYAAFRGGEIPLAIVGILAAAVSAYYYLRVVVNLYMHAGDAPESRKSASMTESIALSAAALVILAVGIYPSPLLRLIDSILR.

Transmembrane regions (helical) follow at residues 6-26 (IWII…LLLG), 37-57 (VGVA…PAAL), 61-81 (LGVA…LTAA), 96-116 (ISGE…AVVS), 121-141 (LLIL…LVAI), 156-176 (LLLG…LYAA), 197-217 (PIAL…ISLV), 234-254 (VVAF…LLLL), 263-283 (LHTP…LAAL), 291-311 (MLAY…LTGS), 315-335 (FAAV…AFGA), 362-382 (AGIL…AGFI), 397-419 (IPLA…RVVV), and 441-461 (IALS…SPLL).

Belongs to the complex I subunit 2 family. In terms of assembly, NDH-1 is composed of 14 different subunits. Subunits NuoA, H, J, K, L, M, N constitute the membrane sector of the complex.

It is found in the cell inner membrane. The enzyme catalyses a quinone + NADH + 5 H(+)(in) = a quinol + NAD(+) + 4 H(+)(out). Functionally, NDH-1 shuttles electrons from NADH, via FMN and iron-sulfur (Fe-S) centers, to quinones in the respiratory chain. The immediate electron acceptor for the enzyme in this species is believed to be ubiquinone. Couples the redox reaction to proton translocation (for every two electrons transferred, four hydrogen ions are translocated across the cytoplasmic membrane), and thus conserves the redox energy in a proton gradient. This is NADH-quinone oxidoreductase subunit N from Geotalea uraniireducens (strain Rf4) (Geobacter uraniireducens).